Here is a 483-residue protein sequence, read N- to C-terminus: Probable cobyric acid synthase (483 aa).

Residues 247–433 (ELHIQIIKLP…LHGIFHNFAF (187 aa)) form the GATase cobBQ-type domain. Catalysis depends on C325, which acts as the Nucleophile. The active site involves H425.

It belongs to the CobB/CobQ family. CobQ subfamily.

Its pathway is cofactor biosynthesis; adenosylcobalamin biosynthesis. Functionally, catalyzes amidations at positions B, D, E, and G on adenosylcobyrinic A,C-diamide. NH(2) groups are provided by glutamine, and one molecule of ATP is hydrogenolyzed for each amidation. This chain is Probable cobyric acid synthase, found in Thermococcus gammatolerans (strain DSM 15229 / JCM 11827 / EJ3).